The following is a 222-amino-acid chain: Coiled-coil domain-containing protein 70 (222 aa).

Residues 129–153 (NALWERDRNLLQEDKALWEEEKALW) adopt a coiled-coil conformation.

The polypeptide is Coiled-coil domain-containing protein 70 (Homo sapiens (Human)).